The chain runs to 255 residues: NAD kinase (255 aa).

D44 serves as the catalytic Proton acceptor. NAD(+)-binding positions include 44-45, H49, 114-115, D144, A152, 155-160, and Q216; these read DG, NE, and SAYNLS.

This sequence belongs to the NAD kinase family. A divalent metal cation is required as a cofactor.

Its subcellular location is the cytoplasm. The catalysed reaction is NAD(+) + ATP = ADP + NADP(+) + H(+). Functionally, involved in the regulation of the intracellular balance of NAD and NADP, and is a key enzyme in the biosynthesis of NADP. Catalyzes specifically the phosphorylation on 2'-hydroxyl of the adenosine moiety of NAD to yield NADP. This is NAD kinase from Rickettsia bellii (strain OSU 85-389).